The primary structure comprises 274 residues: Dermonecrotic toxin SdSicTox-betaIIB1bviii (274 aa).

Histidine 5 is a catalytic residue. Mg(2+) is bound by residues glutamate 25 and aspartate 27. Histidine 41 acts as the Nucleophile in catalysis. 2 disulfide bridges follow: cysteine 45–cysteine 51 and cysteine 47–cysteine 190. Aspartate 85 contributes to the Mg(2+) binding site.

This sequence belongs to the arthropod phospholipase D family. Class II subfamily. Mg(2+) serves as cofactor. Expressed by the venom gland.

It localises to the secreted. The catalysed reaction is an N-(acyl)-sphingosylphosphocholine = an N-(acyl)-sphingosyl-1,3-cyclic phosphate + choline. The enzyme catalyses an N-(acyl)-sphingosylphosphoethanolamine = an N-(acyl)-sphingosyl-1,3-cyclic phosphate + ethanolamine. It carries out the reaction a 1-acyl-sn-glycero-3-phosphocholine = a 1-acyl-sn-glycero-2,3-cyclic phosphate + choline. It catalyses the reaction a 1-acyl-sn-glycero-3-phosphoethanolamine = a 1-acyl-sn-glycero-2,3-cyclic phosphate + ethanolamine. Dermonecrotic toxins cleave the phosphodiester linkage between the phosphate and headgroup of certain phospholipids (sphingolipid and lysolipid substrates), forming an alcohol (often choline) and a cyclic phosphate. This toxin acts on sphingomyelin (SM). It may also act on ceramide phosphoethanolamine (CPE), lysophosphatidylcholine (LPC) and lysophosphatidylethanolamine (LPE), but not on lysophosphatidylserine (LPS), and lysophosphatidylglycerol (LPG). It acts by transphosphatidylation, releasing exclusively cyclic phosphate products as second products. Induces dermonecrosis, hemolysis, increased vascular permeability, edema, inflammatory response, and platelet aggregation. The polypeptide is Dermonecrotic toxin SdSicTox-betaIIB1bviii (Sicarius cf. damarensis (strain GJB-2008) (Six-eyed sand spider)).